Consider the following 149-residue polypeptide: Globin (149 aa).

Residues 2–149 (VLTKDEFDSL…KIFTGVAGQL (148 aa)) form the Globin domain. His100 lines the heme pocket.

It belongs to the globin family. Monomer.

Oxygen binding protein. The sequence is that of Globin from Isoparorchis hypselobagri (Giant trematode).